Here is a 428-residue protein sequence, read N- to C-terminus: MAFEFKLPDIGEGIHEGEIVKWFVKPGDEVNEDDVLCEVQNDKAVVEIPSPVKGKVLEILVPEGTVATVGQTLITLDAPGYENMTFKGQEQEEAKKEEKTETVSKEEKVDAVAPNAPAAEAEAGPNRRVIAMPSVRKYAREKGVDIRLVQGTGKNGRVLKEDIDAFLAGGAKPAPAAAEEKAAPAAAKPATTEGEFPETREKMSGIRRAIAKAMVHSKHTAPHVTLMDEADVTKLVAHRKKFKAIAAEKGIKLTFLPYVVKALVSALREYPVLNTSIDDETEEIIQKHYYNIGIAADTDRGLLVPVIKHADRKPIFALAQEINELAEKARDGKLTPGEMKGASCTITNIGSAGGQWFTPVINHPEVAILGIGRIAEKPIVRDGEIVAAPMLALSLSFDHRMIDGATAQKALNHIKRLLSDPELLLMEA.

The Lipoyl-binding domain maps to 2–77 (AFEFKLPDIG…TVGQTLITLD (76 aa)). Lysine 43 carries the N6-lipoyllysine modification. Residues 88–123 (GQEQEEAKKEEKTETVSKEEKVDAVAPNAPAAEAEA) are disordered. Over residues 89 to 110 (QEQEEAKKEEKTETVSKEEKVD) the composition is skewed to basic and acidic residues. Low complexity predominate over residues 111 to 123 (AVAPNAPAAEAEA). One can recognise a Peripheral subunit-binding (PSBD) domain in the interval 130–167 (IAMPSVRKYAREKGVDIRLVQGTGKNGRVLKEDIDAFL). Residues 177 to 194 (AAEEKAAPAAAKPATTEG) show a composition bias toward low complexity. Residues 177-201 (AAEEKAAPAAAKPATTEGEFPETRE) are disordered. Histidine 399 is a catalytic residue.

The protein belongs to the 2-oxoacid dehydrogenase family. Forms a 60-polypeptide structural core with icosahedral symmetry. (R)-lipoate serves as cofactor.

It carries out the reaction N(6)-[(R)-dihydrolipoyl]-L-lysyl-[protein] + acetyl-CoA = N(6)-[(R)-S(8)-acetyldihydrolipoyl]-L-lysyl-[protein] + CoA. The pyruvate dehydrogenase complex catalyzes the overall conversion of pyruvate to acetyl-CoA and CO(2). It contains multiple copies of three enzymatic components: pyruvate dehydrogenase (E1), dihydrolipoamide acetyltransferase (E2) and lipoamide dehydrogenase (E3). The sequence is that of Dihydrolipoyllysine-residue acetyltransferase component of pyruvate dehydrogenase complex (pdhC) from Geobacillus stearothermophilus (Bacillus stearothermophilus).